The following is a 432-amino-acid chain: 3-phosphoshikimate 1-carboxyvinyltransferase (432 aa).

Positions 22, 23, and 27 each coordinate 3-phosphoshikimate. Residue Lys22 participates in phosphoenolpyruvate binding. Phosphoenolpyruvate is bound by residues Gly96 and Arg127. The 3-phosphoshikimate site is built by Ser173, Ser174, Gln175, Ser201, Asp316, Asn339, and Lys343. Phosphoenolpyruvate is bound at residue Gln175. Asp316 serves as the catalytic Proton acceptor. The phosphoenolpyruvate site is built by Arg347, Arg391, and Lys416.

The protein belongs to the EPSP synthase family. In terms of assembly, monomer.

It localises to the cytoplasm. It carries out the reaction 3-phosphoshikimate + phosphoenolpyruvate = 5-O-(1-carboxyvinyl)-3-phosphoshikimate + phosphate. It participates in metabolic intermediate biosynthesis; chorismate biosynthesis; chorismate from D-erythrose 4-phosphate and phosphoenolpyruvate: step 6/7. In terms of biological role, catalyzes the transfer of the enolpyruvyl moiety of phosphoenolpyruvate (PEP) to the 5-hydroxyl of shikimate-3-phosphate (S3P) to produce enolpyruvyl shikimate-3-phosphate and inorganic phosphate. This Actinobacillus pleuropneumoniae serotype 5b (strain L20) protein is 3-phosphoshikimate 1-carboxyvinyltransferase.